The sequence spans 40 residues: Natriuretic peptide PpNP-b (40 aa).

Residues 1–8 (SGSKTANI) constitute a propeptide that is removed on maturation. A disulfide bridge connects residues cysteine 12 and cysteine 28. The interval 20-40 (IGTTSGMGCGRPRPKPTPGGS) is disordered.

It belongs to the natriuretic peptide family. Expressed by the venom gland.

It is found in the secreted. Functionally, snake venom natriuretic peptide that targets both NPR1 and NPR2. Exhibits hypotensive and vasodepressor activities. This Pseudechis porphyriacus (Red-bellied black snake) protein is Natriuretic peptide PpNP-b.